Consider the following 235-residue polypeptide: Myelin protein zero-like protein 3 (235 aa).

The signal sequence occupies residues 1-31; sequence MQQRGAAGSRGCALFPLLGVLFFQGVYIVFS. The Ig-like V-type domain occupies 32–148; sequence LEIRADAHVR…NIPMTELTVT (117 aa). Topologically, residues 32 to 158 are extracellular; it reads LEIRADAHVR…ERGFGTMLSS (127 aa). An intrachain disulfide couples Cys-52 to Cys-128. Asn-123 carries N-linked (GlcNAc...) asparagine glycosylation. A helical membrane pass occupies residues 159 to 179; the sequence is VALLSILVFVPSAVVVALLLV. The Cytoplasmic portion of the chain corresponds to 180 to 235; that stretch reads RMGRKAAGLKKRSRSGYKKSSIEVSDDTDQEEEEACMARLCVRCAECLDSDYEETY.

Belongs to the myelin P0 protein family.

Its subcellular location is the membrane. Mediates homophilic cell-cell adhesion. This chain is Myelin protein zero-like protein 3 (MPZL3), found in Homo sapiens (Human).